Reading from the N-terminus, the 359-residue chain is Elongation factor Ts 1, mitochondrial (359 aa).

The segment covering 323-341 has biased composition (low complexity); it reads GKAAPAPKAEEPAAVAPAK. Residues 323 to 345 form a disordered region; the sequence is GKAAPAPKAEEPAAVAPAKADAE.

The protein belongs to the EF-Ts family.

It localises to the mitochondrion. In terms of biological role, associates with the EF-Tu.GDP complex and induces the exchange of GDP to GTP. It remains bound to the aminoacyl-tRNA.EF-Tu.GTP complex up to the GTP hydrolysis stage on the ribosome. The protein is Elongation factor Ts 1, mitochondrial of Thalassiosira pseudonana (Marine diatom).